Here is a 215-residue protein sequence, read N- to C-terminus: Large ribosomal subunit protein uL3 (215 aa).

The disordered stretch occupies residues 136–155 (GVSISHRSHGSTGQRQDPGK). An N5-methylglutamine modification is found at Gln-151.

The protein belongs to the universal ribosomal protein uL3 family. As to quaternary structure, part of the 50S ribosomal subunit. Forms a cluster with proteins L14 and L19. Methylated by PrmB.

Its function is as follows. One of the primary rRNA binding proteins, it binds directly near the 3'-end of the 23S rRNA, where it nucleates assembly of the 50S subunit. This is Large ribosomal subunit protein uL3 from Rickettsia typhi (strain ATCC VR-144 / Wilmington).